The chain runs to 360 residues: Peptide chain release factor 1 (360 aa).

Residue Gln-235 is modified to N5-methylglutamine.

The protein belongs to the prokaryotic/mitochondrial release factor family. In terms of processing, methylated by PrmC. Methylation increases the termination efficiency of RF1.

It localises to the cytoplasm. Functionally, peptide chain release factor 1 directs the termination of translation in response to the peptide chain termination codons UAG and UAA. The sequence is that of Peptide chain release factor 1 from Methylobacillus flagellatus (strain ATCC 51484 / DSM 6875 / VKM B-1610 / KT).